A 103-amino-acid chain; its full sequence is uncharacterized protein (103 aa).

A run of 3 helical transmembrane segments spans residues 1 to 21 (MPGV…VFLS), 29 to 49 (IAFI…TGYF), and 69 to 89 (VVEW…GLLF).

The protein localises to the cell membrane. This is an uncharacterized protein from Methanocaldococcus jannaschii (strain ATCC 43067 / DSM 2661 / JAL-1 / JCM 10045 / NBRC 100440) (Methanococcus jannaschii).